A 193-amino-acid chain; its full sequence is Phosphatidylglycerophosphatase and protein-tyrosine phosphatase 1 (193 aa).

Residues 1 to 31 (MAASAWLEAGLARVLFYPTLLYTVFRGRVGG) constitute a mitochondrion transit peptide. The Tyrosine-protein phosphatase domain occupies 37–188 (WYHRIDHTVL…LKEFHKEIAA (152 aa)). An N6-succinyllysine modification is found at Lys-85. The Phosphocysteine intermediate role is filled by Cys-132.

This sequence belongs to the protein-tyrosine phosphatase family. Non-receptor class dual specificity subfamily. As to quaternary structure, interacts with STYXL1; the interaction inhibits PTPMT1 catalytic activity. As to expression, expressed in liver and in pancreatic beta cells.

The protein localises to the mitochondrion inner membrane. It carries out the reaction O-phospho-L-tyrosyl-[protein] + H2O = L-tyrosyl-[protein] + phosphate. It catalyses the reaction O-phospho-L-seryl-[protein] + H2O = L-seryl-[protein] + phosphate. The catalysed reaction is O-phospho-L-threonyl-[protein] + H2O = L-threonyl-[protein] + phosphate. The enzyme catalyses a 1,2-diacyl-sn-glycero-3-phospho-(1'-sn-glycero-3'-phosphate) + H2O = a 1,2-diacyl-sn-glycero-3-phospho-(1'-sn-glycerol) + phosphate. It carries out the reaction 1,2-di-(9Z-octadecenoyl)-sn-glycero-3-phospho-(1'-sn-glycerol-3'-phosphate) + H2O = 1,2-di-(9Z-octadecenoyl)-sn-glycero-3-phospho-(1'-sn-glycerol) + phosphate. It catalyses the reaction 1,2-dioctanoyl-sn-glycero-3-phospho-(1D-myo-inositol-5-phosphate) + H2O = 1,2-dioctanoyl-sn-glycero-3-phospho-(1D-myo-inositol) + phosphate. The catalysed reaction is a 1-acyl-2-hexanoyl-sn-glycero-3-phospho-(1D-myo-inositol-5-phosphate) + H2O = a 1-acyl-2-hexanoyl-sn-glycero-3-phospho-(1D-myo-inositol) + phosphate. The enzyme catalyses 1,2-dibutyryl-sn-glycero-3-phospho-(1D-myo-inositol-5-phosphate) + H2O = 1,2-dibutyryl-sn-glycero-3-phospho-(1D-myo-inositol) + phosphate. Its pathway is phospholipid metabolism; phosphatidylglycerol biosynthesis; phosphatidylglycerol from CDP-diacylglycerol: step 2/2. Its function is as follows. Lipid phosphatase which dephosphorylates phosphatidylglycerophosphate (PGP) to phosphatidylglycerol (PG). PGP is an essential intermediate in the biosynthetic pathway of cardiolipin, a mitochondrial-specific phospholipid regulating the membrane integrity and activities of the organelle. Has also been shown to display phosphatase activity toward phosphoprotein substrates, specifically mediates dephosphorylation of mitochondrial proteins, thereby playing an essential role in ATP production. Has probably a preference for proteins phosphorylated on Ser and/or Thr residues compared to proteins phosphorylated on Tyr residues. Probably involved in regulation of insulin secretion in pancreatic beta cells. May prevent intrinsic apoptosis, probably by regulating mitochondrial membrane integrity. This chain is Phosphatidylglycerophosphatase and protein-tyrosine phosphatase 1, found in Rattus norvegicus (Rat).